The chain runs to 237 residues: DNA repair protein RecO (237 aa).

This sequence belongs to the RecO family.

Functionally, involved in DNA repair and RecF pathway recombination. The chain is DNA repair protein RecO from Rickettsia akari (strain Hartford).